The following is a 243-amino-acid chain: Vesicle-associated membrane protein-associated protein B/C (243 aa).

A2 carries the N-acetylalanine modification. The Cytoplasmic segment spans residues 2–222; it reads AKVEQVLSLE…PTGKEEGLST (221 aa). The region spanning 7 to 124 is the MSP domain; sequence VLSLEPQHEL…MDSKLRCVFE (118 aa). At S146 the chain carries Phosphoserine. Residue K147 forms a Glycyl lysine isopeptide (Lys-Gly) (interchain with G-Cter in SUMO1) linkage. T150 is modified (phosphothreonine). Phosphoserine is present on residues S156, S158, S159, S160, and S206. The stretch at 159 to 196 forms a coiled coil; sequence SSLDDTEVKKVMEECKRLQGEVQRLREENKQFKEEDGL. A helical; Anchor for type IV membrane protein transmembrane segment spans residues 223 to 243; that stretch reads RLLALVVLFFIVGVIIGKIAL.

The protein belongs to the VAMP-associated protein (VAP) (TC 9.B.17) family. Homodimer, and heterodimer with VAPA. Interacts with VAMP1 and VAMP2. Interacts (via MSP domain) with ZFYVE27. Interacts with RMDN3. Interacts with KIF5A in a ZFYVE27-dependent manner. Interacts (via MSP domain) with STARD3 (via phospho-FFAT motif). Interacts with STARD3NL (via FFAT motif). Interacts with CERT1. Interacts with PLEKHA3 and SACM1L to form a ternary complex. Interacts with VPS13A (via FFAT motif). Interacts with RB1CC1 (via phosphorylated FFAT motif), MIGA2 (via phosphorylated FFAT motif), RMDN3 (via phosphorylated FFAT motif), OSBPL1A (via FFAT motif), KCNB1 (via phosphorylated FFAT motif) and KCNB2 (via phosphorylated FFAT motif). Interacts (via MSP domain) with WDR44 (via FFAT motif); the interactions connect the endoplasmic reticulum (ER) with the endosomal tubule. As to quaternary structure, (Microbial infection) Interacts (via MSP domain) with hepatitis C virus (HCV) non-structural protein 5A (via disordered domain D3). Interacts with HCV RNA-directed RNA polymerase. Ubiquitous. Isoform 1 predominates.

The protein localises to the endoplasmic reticulum membrane. Its function is as follows. Endoplasmic reticulum (ER)-anchored protein that mediates the formation of contact sites between the ER and endosomes via interaction with FFAT motif-containing proteins such as STARD3 or WDR44. Interacts with STARD3 in a FFAT motif phosphorylation dependent manner. Via interaction with WDR44 participates in neosynthesized protein export. Participates in the endoplasmic reticulum unfolded protein response (UPR) by inducing ERN1/IRE1 activity. Involved in cellular calcium homeostasis regulation. In Homo sapiens (Human), this protein is Vesicle-associated membrane protein-associated protein B/C.